A 634-amino-acid polypeptide reads, in one-letter code: Chaperone protein dnaK2 (634 aa).

At threonine 197 the chain carries Phosphothreonine; by autocatalysis. Residues 601–620 (SAEASANAQAGPSSSSSSSS) show a composition bias toward low complexity. Residues 601–634 (SAEASANAQAGPSSSSSSSSGDDDVIDAEFSESK) are disordered. A compositionally biased stretch (acidic residues) spans 621-634 (GDDDVIDAEFSESK).

It belongs to the heat shock protein 70 family.

Functionally, acts as a chaperone. In Synechococcus elongatus (strain ATCC 33912 / PCC 7942 / FACHB-805) (Anacystis nidulans R2), this protein is Chaperone protein dnaK2 (dnaK2).